The sequence spans 359 residues: Peptide chain release factor 1 (359 aa).

The residue at position 235 (Gln-235) is an N5-methylglutamine. Residues 280-306 (AERQRADSERSADRKSQVGSGDRSERI) form a disordered region.

It belongs to the prokaryotic/mitochondrial release factor family. Methylated by PrmC. Methylation increases the termination efficiency of RF1.

The protein localises to the cytoplasm. In terms of biological role, peptide chain release factor 1 directs the termination of translation in response to the peptide chain termination codons UAG and UAA. The chain is Peptide chain release factor 1 from Rhizobium johnstonii (strain DSM 114642 / LMG 32736 / 3841) (Rhizobium leguminosarum bv. viciae).